Here is a 59-residue protein sequence, read N- to C-terminus: Small ribosomal subunit protein bS21 (59 aa).

It belongs to the bacterial ribosomal protein bS21 family.

The protein is Small ribosomal subunit protein bS21 of Acholeplasma laidlawii (strain PG-8A).